Here is an 855-residue protein sequence, read N- to C-terminus: Pre-mRNA-splicing factor SYF1 (855 aa).

HAT repeat units lie at residues 15–47 (LVFE…FKQG), 48–80 (APKP…ARRA), 90–122 (PAYE…FLMD), 124–158 (GRVT…FLRS), 160–192 (PLPE…SSDR), 198–230 (QRLA…LISQ), 235–268 (VQSL…YYIR), 270–305 (GHFE…FEES), and 369–407 (GRPR…FYED). N6-acetyllysine is present on lysine 420. HAT repeat units follow at residues 498 to 530 (GTFQ…FLEE), 532 to 566 (KYFE…KFIS), 571 to 605 (RKLE…LEEE), 643 to 677 (YGVT…MECK), and 679 to 713 (GEID…FEVR). A disordered region spans residues 808–855 (AELAQQANPEEIQLGEDEDEDEMDLEPNEVRLEQQSVPAAVFGSLKED). Positions 820–834 (QLGEDEDEDEMDLEP) are enriched in acidic residues. A Phosphoserine modification is found at serine 851.

Belongs to the crooked-neck family. As to quaternary structure, associates with RNA polymerase II, the TCR-specific proteins CKN1/CSA and ERCC6/CSB, and XPA. Identified in the spliceosome C complex. Component of the XAB2 complex, a multimeric protein complex composed of XAB2, PRPF19, AQR, ZNF830, ISY1, and PPIE. Identified in a pentameric intron-binding (IB) complex composed of AQR, XAB2, ISY1, ZNF830 and PPIE that is incorporated into the spliceosome as a preassembled complex. The IB complex does not contain PRPF19.

It is found in the nucleus. Functionally, involved in pre-mRNA splicing as component of the spliceosome. Involved in transcription-coupled repair (TCR), transcription and pre-mRNA splicing. The sequence is that of Pre-mRNA-splicing factor SYF1 (Xab2) from Rattus norvegicus (Rat).